We begin with the raw amino-acid sequence, 40 residues long: Biotin carboxylase (40 aa).

Residues 1–40 (ILVANRGEIAVRLLEEAPSPALTPELRITAYLPSGGPFVR) form the Biotin carboxylation domain. The 15-residue stretch at 13–27 (LLEEAPSPALTPELR) folds into the ATP-grasp domain.

Acetyl-CoA carboxylase is a heterohexamer of biotin carboxyl carrier protein, biotin carboxylase and the two subunits of carboxyl transferase in a 2:2 complex. The cofactor is Mg(2+). Mn(2+) serves as cofactor.

The catalysed reaction is N(6)-biotinyl-L-lysyl-[protein] + hydrogencarbonate + ATP = N(6)-carboxybiotinyl-L-lysyl-[protein] + ADP + phosphate + H(+). It functions in the pathway lipid metabolism; malonyl-CoA biosynthesis; malonyl-CoA from acetyl-CoA: step 1/1. Its function is as follows. This protein is a component of the acetyl coenzyme A carboxylase complex; first, biotin carboxylase catalyzes the carboxylation of the carrier protein and then the transcarboxylase transfers the carboxyl group to form malonyl-CoA. This Populus euphratica (Euphrates poplar) protein is Biotin carboxylase.